We begin with the raw amino-acid sequence, 475 residues long: MSPKTETKASVGFKAGVKEYKLTYYTPEYETKDTDILAAFRVTPQPGVPPEEAGAAVAAESSTGTWTTVWTDGLTSLDRYKGRCYHIEPVPGEESQFIAYVAYPLDLFEEGSVTNMFTSIVGNVFGFKALRALRLEDLRIPTAYVKTFQGPPHGIQVERDKLNKYGRPLLGCTIKPKLGLSAKNYGRAVYECLRGGLDFTKDDENVNSQPFMRWRDRFLFCAEALYKAQAETGEIKGHYLNATAGTCEEMMKRAIFARELGVPIVMHDYLTGGFTANTSLAHYCRDNGLLLHIHRAMHAVIDRQKNHGIHFRVLAKALRMSGGDHIHSGTVVGKLEGERDITLGFVDLLRDDFIEKDRSRGIYFTQDWVSLPGVLPVASGGIHVWHMPALTEIFGDDSVLQFGGGTLGHPWGNAPGAVANRVALEACVQARNEGRDLASQGNEIIREASKWSPELAAACEVWKEIKFEFKAVDTL.

The propeptide occupies 1 to 2 (MS). P3 is subject to N-acetylproline. K14 carries the N6,N6,N6-trimethyllysine modification. Positions 123 and 173 each coordinate substrate. Catalysis depends on K175, which acts as the Proton acceptor. K177 lines the substrate pocket. 3 residues coordinate Mg(2+): K201, D203, and E204. Position 201 is an N6-carboxylysine (K201). H294 acts as the Proton acceptor in catalysis. Positions 295, 327, and 379 each coordinate substrate.

Belongs to the RuBisCO large chain family. Type I subfamily. Heterohexadecamer of 8 large chains and 8 small chains; disulfide-linked. The disulfide link is formed within the large subunit homodimers. Mg(2+) serves as cofactor. Post-translationally, the disulfide bond which can form in the large chain dimeric partners within the hexadecamer appears to be associated with oxidative stress and protein turnover.

It localises to the plastid. The protein localises to the chloroplast. The catalysed reaction is 2 (2R)-3-phosphoglycerate + 2 H(+) = D-ribulose 1,5-bisphosphate + CO2 + H2O. The enzyme catalyses D-ribulose 1,5-bisphosphate + O2 = 2-phosphoglycolate + (2R)-3-phosphoglycerate + 2 H(+). Functionally, ruBisCO catalyzes two reactions: the carboxylation of D-ribulose 1,5-bisphosphate, the primary event in carbon dioxide fixation, as well as the oxidative fragmentation of the pentose substrate in the photorespiration process. Both reactions occur simultaneously and in competition at the same active site. This Magnolia macrophylla (Bigleaf magnolia) protein is Ribulose bisphosphate carboxylase large chain.